Consider the following 237-residue polypeptide: Derlin-2 (237 aa).

Residues 1–20 (MNGVVAALEEMPPVTRFYTG) lie on the Cytoplasmic side of the membrane. The chain crosses the membrane as a helical span at residues 21 to 41 (ACVLLTTAVHLEFVTPFHLYF). Topologically, residues 42-54 (NWELIIRKYQFWR) are lumenal. Residues 55–75 (LITSFCFFGSFGFSFLFNMIF) form a helical membrane-spanning segment. At 76-97 (TYRYCMMLEEGSFRGRRADFVY) the chain is on the cytoplasmic side. A helical transmembrane segment spans residues 98 to 118 (MFLFGAVLMILSGIFVQILFL). At 119-166 (GQAFTIMLVYIWSRRNPMIQMNFFGVLTFTAPYLPWVLLLFSLLLGNN) the chain is on the lumenal side. Residues 167–187 (AVVDFMGIACGHIYFFLEDVF) traverse the membrane as a helical segment. The Cytoplasmic portion of the chain corresponds to 188–237 (PFQEHGKRFLKTPQWLVYLFDERRPEPLPEDERPGGFEWGDEQPEQEQHD). Over residues 212-222 (PEPLPEDERPG) the composition is skewed to basic and acidic residues. Residues 212-237 (PEPLPEDERPGGFEWGDEQPEQEQHD) are disordered. Acidic residues predominate over residues 226 to 237 (WGDEQPEQEQHD).

This sequence belongs to the derlin family.

It localises to the endoplasmic reticulum membrane. In terms of biological role, may be required for the degradation process of some specific misfolded endoplasmic reticulum (ER) luminal proteins. Participates in the transfer of misfolded proteins from the ER to the cytosol, where they are destroyed by the proteasome in a ubiquitin-dependent manner. Its precise function remains unclear, but its ability to complement der1 mutations in C.cerevisiae, suggests a similar function in the degradation of ER misfolded proteins. This is Derlin-2 from Caenorhabditis elegans.